The sequence spans 3432 residues: Genome polyprotein (3432 aa).

Residues 2–15 (TKKPGGPGKNRAIN) are interaction with host EXOC1. Residues 2 to 109 (TKKPGGPGKN…KKQNKRGGNE (108 aa)) lie on the Cytoplasmic side of the membrane. A hydrophobic; homodimerization of capsid protein C region spans residues 37-72 (LLDGRGPVRFVLALITFFKFTALAPTKALLGRWRAV). The propeptide at 106-127 (GGNESSIMWLASLAIVIACAGA) is ER anchor for the capsid protein C, removed in mature form by serine protease NS3. A helical membrane pass occupies residues 110 to 130 (SSIMWLASLAIVIACAGAMKL). Over 131-253 (SNFQGKLLMT…ATRYLMKTEN (123 aa)) the chain is Extracellular. N-linked (GlcNAc...) asparagine; by host glycosylation is present at N142. The chain crosses the membrane as a helical span at residues 254 to 274 (WIIRNPGYAFLAAALGWMLGS). The Cytoplasmic segment spans residues 275–279 (NSGQR). Residues 280–294 (VVFTILLLLVAPAYS) traverse the membrane as a helical segment. Residues 295–746 (FNCLGMGNRD…QVFGGAFRTL (452 aa)) are Extracellular-facing. Disulfide bonds link C297–C324, C354–C410, C354–C415, C368–C399, C386–C410, and C386–C415. Residues 392 to 405 (DRGWGNGCGLFGKG) are fusion peptide. An N-linked (GlcNAc...) asparagine; by host glycan is attached at N448. Cystine bridges form between C484–C581 and C598–C629. Residues 747-767 (FGGMSWITQGLMGALLLWMGV) form a helical membrane-spanning segment. Topologically, residues 768–773 (NARDRS) are cytoplasmic. Residues 774-794 (IALAFLATGGVLVFLATNVHA) traverse the membrane as a helical segment. Residues 795–1219 (DTGCAIDITR…AFAEANSGGD (425 aa)) lie on the Extracellular side of the membrane. 6 disulfide bridges follow: C798-C809, C849-C937, C973-C1017, C1074-C1123, C1085-C1106, and C1107-C1110. N-linked (GlcNAc...) asparagine; by host glycosylation is found at N924 and N1001. Residues 1220-1240 (VLHLALIAVFKIQPAFLVMNM) form a helical membrane-spanning segment. At 1241–1250 (LSARWTNQEN) the chain is on the cytoplasmic side. Residues 1251–1271 (MVLVLGAAFFQLASVDLQIGV) form a helical membrane-spanning segment. A topological domain (lumenal) is located at residue H1272. A helical membrane pass occupies residues 1273 to 1293 (GILNAAAIAWMIVRAITFPTT). Over 1294-1309 (STVAMPVLALLTPGMR) the chain is Cytoplasmic. A helical membrane pass occupies residues 1310-1330 (ALYLDTYRIILLVIGICSLLQ). The Lumenal portion of the chain corresponds to 1331–1341 (ERRKTMAKKKG). The helical transmembrane segment at 1342-1362 (AVLLGLALTSTGWFSPTTIAA) threads the bilayer. Over 1363-1374 (GLMVCNPNKKRG) the chain is Cytoplasmic. A helical transmembrane segment spans residues 1375–1395 (WPATEFLSAVGLMFAIVGGLA). The Lumenal portion of the chain corresponds to 1396–1398 (ELD). A helical transmembrane segment spans residues 1399-1419 (IESMSIPFMLAGLMAVSYVIS). The Cytoplasmic portion of the chain corresponds to 1420–1476 (GKATDMWLDRAADISWEMEAAITGSSRRLDVKLDDDGDFHLIDDPGVPWKVWLLRMS). Positions 1427 to 1466 (LDRAADISWEMEAAITGSSRRLDVKLDDDGDFHLIDDPGV) are interacts with and activates NS3 protease. Positions 1477–1497 (CIGLAALTPWAIVPAAFGYWL) form an intramembrane region, helical. The Cytoplasmic portion of the chain corresponds to 1498–2173 (TLKTTKRGGV…RMALEELPDA (676 aa)). Residues 1505–1682 (GGVFWDTPSP…DRQEEPVPDA (178 aa)) form the Peptidase S7 domain. Catalysis depends on charge relay system; for serine protease NS3 activity residues H1555, D1579, and S1639. One can recognise a Helicase ATP-binding domain in the interval 1685 to 1841 (PSMLKKRQMT…DSNAPIHDLQ (157 aa)). Residues 1689 to 1692 (KKRQ) are important for RNA-binding. 1698-1705 (LHPGSGKT) is an ATP binding site. Residues 1789-1792 (DEAH) carry the DEAH box motif. The 166-residue stretch at 1852 to 2017 (GYEWITEYAG…GLVAQLYGPE (166 aa)) folds into the Helicase C-terminal domain. K1893 carries the N6-acetyllysine; by host modification. The interval 1950-1969 (NPSPITSASAAQRRGRVGRN) is disordered. The regulates the ATPase activity of NS3 helicase stretch occupies residues 2168–2172 (EELPD). Residues 2174–2194 (LETITLIVAITVMTGGFFLLM) traverse the membrane as a helical segment. The Lumenal segment spans residues 2195–2199 (MQRKG). The segment at residues 2200-2220 (IGKMGLGALVLTLATFFLWAA) is an intramembrane region (helical). Position 2221 (E2221) is a topological domain, lumenal. A helical transmembrane segment spans residues 2222–2242 (VPGTKIAGTLLVALLLMVVLI). Over 2243–2257 (PEPEKQRSQTDNQLA) the chain is Cytoplasmic. A helical membrane pass occupies residues 2258–2278 (VFLICVLTVVGVVAANEYGML). Over 2279 to 2311 (EKTKADLKSMFGGRTQAPGLTGLPSMALDLRPA) the chain is Lumenal. The segment at residues 2312–2332 (TAWALYGGSTVVLTPLLKHLI) is an intramembrane region (helical). Residues 2333-2368 (TSEYVTTSLASISSQAGSLFVLPRGVPFTDLDLTVG) are Lumenal-facing. Residues 2369 to 2389 (LVFLGCWGQITLTTFLTAMVL) form a helical membrane-spanning segment. Residues 2390–2444 (VTLHYGYMLPGWQAEALRAAQRRTAAGIMKNAVVDGMVATDVPELERTTPLMQKK) lie on the Cytoplasmic side of the membrane. Residues 2445-2465 (VGQVLLIGVSVAAFLVNPNVT) traverse the membrane as a helical segment. Topologically, residues 2466 to 2469 (TVRE) are lumenal. Residues 2470-2490 (AGVLVTAATLTLWDNGASAVW) traverse the membrane as a helical segment. The Cytoplasmic portion of the chain corresponds to 2491 to 3432 (NSTTATGLCH…DVLIQEDRVI (942 aa)). The mRNA cap 0-1 NS5-type MT domain maps to 2528–2793 (GRPGGRTLGE…DVNLGSGTRA (266 aa)). S-adenosyl-L-methionine is bound at residue S2583. S2583 carries the post-translational modification Phosphoserine. The active-site For 2'-O-MTase activity is K2588. S-adenosyl-L-methionine-binding residues include G2613, W2614, T2631, K2632, D2658, and V2659. Catalysis depends on D2673, which acts as the For 2'-O-MTase activity. Residue I2674 coordinates S-adenosyl-L-methionine. Residues K2709 and E2745 each act as for 2'-O-MTase activity in the active site. An S-adenosyl-L-methionine-binding site is contributed by Y2747. Zn(2+) contacts are provided by E2967, H2971, C2976, and C2979. In terms of domain architecture, RdRp catalytic spans 3057–3209 (GKMYADDTAG…KPLDDRFATA (153 aa)). The Zn(2+) site is built by H3244, C3260, and C3379.

In the N-terminal section; belongs to the class I-like SAM-binding methyltransferase superfamily. mRNA cap 0-1 NS5-type methyltransferase family. As to quaternary structure, homodimer. Interacts (via N-terminus) with host EXOC1 (via C-terminus); this interaction results in EXOC1 degradation through the proteasome degradation pathway. Forms heterodimers with envelope protein E in the endoplasmic reticulum and Golgi. In terms of assembly, homodimer; in the endoplasmic reticulum and Golgi. Interacts with protein prM. Interacts with non-structural protein 1. Interacts with host HSPA5. As to quaternary structure, homodimer; Homohexamer when secreted. Interacts with envelope protein E. NS1 interacts with NS4B. Interacts with host complement protein CFH; this interaction leads to the degradation of C3. Interacts (via N-terminus) with serine protease NS3. In terms of assembly, forms a heterodimer with serine protease NS3. May form homooligomers. As to quaternary structure, forms a heterodimer with NS2B. Interacts with non-structural protein 2A (via N-terminus). Interacts with NS4B. Interacts with unphosphorylated RNA-directed RNA polymerase NS5; this interaction stimulates RNA-directed RNA polymerase NS5 guanylyltransferase activity. Interacts with host ILF2. Interacts with serine protease NS3. In terms of assembly, homodimer. Interacts with host STAT2; this interaction inhibits the phosphorylation of the latter, and, when all viral proteins are present (polyprotein), targets STAT2 for degradation. Interacts with serine protease NS3. Mn(2+) is required as a cofactor. The cofactor is Mg(2+). Post-translationally, specific enzymatic cleavages in vivo yield mature proteins. Cleavages in the lumen of endoplasmic reticulum are performed by host signal peptidase, whereas cleavages in the cytoplasmic side are performed by serine protease NS3. Signal cleavage at the 2K-4B site requires a prior NS3 protease-mediated cleavage at the 4A-2K site. Cleaved in post-Golgi vesicles by a host furin, releasing the mature small envelope protein M, and peptide pr. This cleavage is incomplete as up to 30% of viral particles still carry uncleaved prM. In terms of processing, N-glycosylated. Post-translationally, N-glycosylated. The excreted form is glycosylated and this is required for efficient secretion of the protein from infected cells. Acetylated by host KAT5. Acetylation modulates NS3 RNA-binding and unwinding activities and plays an important positive role for viral replication. In terms of processing, phosphorylated on serines residues. This phosphorylation may trigger NS5 nuclear localization.

It localises to the host endoplasmic reticulum membrane. The protein resides in the virion. It is found in the host nucleus. Its subcellular location is the host cytoplasm. The protein localises to the host perinuclear region. It localises to the secreted. The protein resides in the virion membrane. It is found in the host cell surface. It carries out the reaction Selective hydrolysis of -Xaa-Xaa-|-Yaa- bonds in which each of the Xaa can be either Arg or Lys and Yaa can be either Ser or Ala.. The enzyme catalyses a ribonucleoside 5'-triphosphate + H2O = a ribonucleoside 5'-diphosphate + phosphate + H(+). The catalysed reaction is RNA(n) + a ribonucleoside 5'-triphosphate = RNA(n+1) + diphosphate. It catalyses the reaction ATP + H2O = ADP + phosphate + H(+). It carries out the reaction a 5'-end (5'-triphosphoguanosine)-ribonucleoside in mRNA + S-adenosyl-L-methionine = a 5'-end (N(7)-methyl 5'-triphosphoguanosine)-ribonucleoside in mRNA + S-adenosyl-L-homocysteine. The enzyme catalyses a 5'-end (N(7)-methyl 5'-triphosphoguanosine)-ribonucleoside in mRNA + S-adenosyl-L-methionine = a 5'-end (N(7)-methyl 5'-triphosphoguanosine)-(2'-O-methyl-ribonucleoside) in mRNA + S-adenosyl-L-homocysteine + H(+). Functionally, plays a role in virus budding by binding to the cell membrane and gathering the viral RNA into a nucleocapsid that forms the core of a mature virus particle. During virus entry, may induce genome penetration into the host cytoplasm after hemifusion induced by the surface proteins. Can migrate to the cell nucleus where it modulates host functions. Overcomes the anti-viral effects of host EXOC1 by sequestering and degrading the latter through the proteasome degradation pathway. Its function is as follows. Inhibits RNA silencing by interfering with host Dicer. In terms of biological role, prevents premature fusion activity of envelope proteins in trans-Golgi by binding to envelope protein E at pH6.0. After virion release in extracellular space, gets dissociated from E dimers. Acts as a chaperone for envelope protein E during intracellular virion assembly by masking and inactivating envelope protein E fusion peptide. prM is the only viral peptide matured by host furin in the trans-Golgi network probably to avoid catastrophic activation of the viral fusion activity in acidic Golgi compartment prior to virion release. prM-E cleavage is inefficient, and many virions are only partially matured. These uncleaved prM would play a role in immune evasion. Functionally, may play a role in virus budding. Exerts cytotoxic effects by activating a mitochondrial apoptotic pathway through M ectodomain. May display a viroporin activity. Its function is as follows. Binds to host cell surface receptor and mediates fusion between viral and cellular membranes. Efficient virus attachment to cell is, at least in part, mediated by host HSPA5. Envelope protein is synthesized in the endoplasmic reticulum in the form of heterodimer with protein prM. They play a role in virion budding in the ER, and the newly formed immature particle is covered with 60 spikes composed of heterodimer between precursor prM and envelope protein E. The virion is transported to the Golgi apparatus where the low pH causes dissociation of PrM-E heterodimers and formation of E homodimers. prM-E cleavage is inefficient, and many virions are only partially matured. These uncleaved prM would play a role in immune evasion. In terms of biological role, involved in immune evasion, pathogenesis and viral replication. Once cleaved off the polyprotein, is targeted to three destinations: the viral replication cycle, the plasma membrane and the extracellular compartment. Essential for viral replication. Required for formation of the replication complex and recruitment of other non-structural proteins to the ER-derived membrane structures. Excreted as a hexameric lipoparticle that plays a role against host immune response. Antagonizing the complement function. Binds to the host macrophages and dendritic cells. Inhibits signal transduction originating from Toll-like receptor 3 (TLR3). Component of the viral RNA replication complex that functions in virion assembly and antagonizes the host alpha/beta interferon antiviral response. Functionally, required cofactor for the serine protease function of NS3. May have membrane-destabilizing activity and form viroporins. Its function is as follows. Displays three enzymatic activities: serine protease, NTPase and RNA helicase. NS3 serine protease, in association with NS2B, performs its autocleavage and cleaves the polyprotein at dibasic sites in the cytoplasm: C-prM, NS2A-NS2B, NS2B-NS3, NS3-NS4A, NS4A-2K and NS4B-NS5. NS3 RNA helicase binds RNA and unwinds dsRNA in the 3' to 5' direction. In terms of biological role, regulates the ATPase activity of the NS3 helicase activity. NS4A allows NS3 helicase to conserve energy during unwinding. Functions as a signal peptide for NS4B and is required for the interferon antagonism activity of the latter. Functionally, induces the formation of ER-derived membrane vesicles where the viral replication takes place. Inhibits interferon (IFN)-induced host STAT1 phosphorylation and nuclear translocation, thereby preventing the establishment of cellular antiviral state by blocking the IFN-alpha/beta pathway. Inhibits STAT2 translocation in the nucleus after IFN-alpha treatment. Its function is as follows. Replicates the viral (+) and (-) RNA genome. Performs the capping of genomes in the cytoplasm. NS5 methylates viral RNA cap at guanine N-7 and ribose 2'-O positions. Besides its role in RNA genome replication, also prevents the establishment of cellular antiviral state by blocking the interferon-alpha/beta (IFN-alpha/beta) signaling pathway. Inhibits host TYK2 and STAT2 phosphorylation, thereby preventing activation of JAK-STAT signaling pathway. The chain is Genome polyprotein from Japanese encephalitis virus (strain M28) (JEV).